A 339-amino-acid chain; its full sequence is Adenylosuccinate synthetase (339 aa).

Residues 12 to 18 (GDEGKGS) and 42 to 44 (GHS) each bind GTP. Catalysis depends on Asp-13, which acts as the Proton acceptor. The Mg(2+) site is built by Asp-13 and Gly-42. Residues 13–16 (DEGK), 40–43 (NAGH), Thr-127, Arg-141, Gln-179, Thr-194, and Arg-256 each bind IMP. His-43 (proton donor) is an active-site residue. Position 252–258 (252–258 (TVTGRRR)) interacts with substrate. Residues Arg-258, 284–286 (MLD), and 324–326 (KTG) contribute to the GTP site.

It belongs to the adenylosuccinate synthetase family. As to quaternary structure, homodimer. Mg(2+) is required as a cofactor.

The protein localises to the cytoplasm. The enzyme catalyses IMP + L-aspartate + GTP = N(6)-(1,2-dicarboxyethyl)-AMP + GDP + phosphate + 2 H(+). Its pathway is purine metabolism; AMP biosynthesis via de novo pathway; AMP from IMP: step 1/2. Functionally, plays an important role in the de novo pathway of purine nucleotide biosynthesis. Catalyzes the first committed step in the biosynthesis of AMP from IMP. The protein is Adenylosuccinate synthetase of Pyrococcus horikoshii (strain ATCC 700860 / DSM 12428 / JCM 9974 / NBRC 100139 / OT-3).